The following is a 372-amino-acid chain: Germination protease (372 aa).

The propeptide occupies Met-1–Asp-15.

The protein belongs to the peptidase A25 family. Homotetramer. Autoproteolytically processed. The inactive tetrameric zymogen termed p46 autoprocesses to a smaller form termed p41, which is active only during spore germination.

It catalyses the reaction Endopeptidase action with P4 Glu or Asp, P1 preferably Glu &gt; Asp, P1' hydrophobic and P2' Ala.. Initiates the rapid degradation of small, acid-soluble proteins during spore germination. The protein is Germination protease of Geobacillus sp. (strain WCH70).